The chain runs to 112 residues: MMKGGMAGLMKQAQQMQEKMAKMQEELANAEVTGKAGGDLVTVVMTGRHDVKKVSIDPSVLPGLDEDDREVVEDLVAAAVNAAVRQIEANSQAKMGSMTAGMNLPAGMKLPF.

This sequence belongs to the YbaB/EbfC family. As to quaternary structure, homodimer.

It localises to the cytoplasm. Its subcellular location is the nucleoid. Binds to DNA and alters its conformation. May be involved in regulation of gene expression, nucleoid organization and DNA protection. This chain is Nucleoid-associated protein Pfl01_1806, found in Pseudomonas fluorescens (strain Pf0-1).